A 1241-amino-acid chain; its full sequence is RNA polymerase II C-terminal domain phosphatase-like 3 (1241 aa).

7 disordered regions span residues 361 to 402 (DHDA…TTEG), 428 to 470 (VFKT…HLIY), 505 to 525 (ISAP…RDPR), 578 to 598 (KRQK…WLED), 677 to 702 (AIQK…VSTP), 720 to 800 (VLQD…QNGT), and 852 to 885 (TERD…GPTR). Residues 368–378 (PSPTRETTPSL) are compositionally biased toward polar residues. The segment covering 441–466 (GEPNDGNGDVGGEVSSSVVKSSNPGS) has biased composition (low complexity). A compositionally biased stretch (basic and acidic residues) spans 677-686 (AIQKPMDPRR). Composition is skewed to polar residues over residues 691–702 (PGSSVQPGVSTP) and 791–800 (PRQNISQNGT). A compositionally biased stretch (low complexity) spans 871 to 881 (SVSAASVTAAA). The FCP1 homology domain occupies 923-1103 (FASQKLSLVL…GLLGPSLLEL (181 aa)). One can recognise a BRCT domain in the interval 1146 to 1239 (EQRKILAGCR…QRANENLYAI (94 aa)).

In terms of assembly, interacts with RAP74. Requires Mg(2+) as cofactor. Co(2+) is required as a cofactor. Mn(2+) serves as cofactor.

It is found in the nucleus. It carries out the reaction O-phospho-L-seryl-[protein] + H2O = L-seryl-[protein] + phosphate. The enzyme catalyses O-phospho-L-threonyl-[protein] + H2O = L-threonyl-[protein] + phosphate. Functionally, completely dephosphorylates 'Ser-2', and partially 'Ser-5' and 'Ser-7' of the heptad repeats YSPTSPS in the C-terminal domain (CTD) of the largest RNA polymerase II subunit (RPB1). Involved in defense response. Acts as a negative regulator of immune gene expression and immunity to pathogen infections. Preferentially dephosphorylates 'Ser-2' of RNA polymerase II CTD. This counterregulates the MAP kinase (MAPK) or cyclin-dependent kinase C (CDKC)-mediated phosphorylation of CTD in response to pathogens and upon perception of microbe-associated molecular patterns (MAMPs). MAPKs phosphorylate and activate CDKCs, which are CTD kinases that positively regulate plant innate immunity. Acts as a negative regulator of stress gene transcription involved in abscisic acid (ABA) mediated signaling pathway and cold resistance. Acts as a post-transcriptional gene silencing (PTGS) suppressor. In Arabidopsis thaliana (Mouse-ear cress), this protein is RNA polymerase II C-terminal domain phosphatase-like 3.